Reading from the N-terminus, the 148-residue chain is Large-conductance mechanosensitive channel (148 aa).

Transmembrane regions (helical) follow at residues 9–29 (AFAVKGNVVDMAVGIIIGAAF) and 79–99 (IQTVIDFIIVAFAIFMGVKAI).

It belongs to the MscL family. Homopentamer.

The protein localises to the cell inner membrane. Its function is as follows. Channel that opens in response to stretch forces in the membrane lipid bilayer. May participate in the regulation of osmotic pressure changes within the cell. The polypeptide is Large-conductance mechanosensitive channel (Pseudomonas syringae pv. tomato (strain ATCC BAA-871 / DC3000)).